Here is an 832-residue protein sequence, read N- to C-terminus: Leucine--tRNA ligase (832 aa).

The 'HIGH' region motif lies at 58–68 (PYPSGDLHMGH). The 'KMSKS' region motif lies at 598–602 (AMSKS). Lys-601 provides a ligand contact to ATP.

It belongs to the class-I aminoacyl-tRNA synthetase family.

It localises to the cytoplasm. It catalyses the reaction tRNA(Leu) + L-leucine + ATP = L-leucyl-tRNA(Leu) + AMP + diphosphate. This chain is Leucine--tRNA ligase, found in Acidothermus cellulolyticus (strain ATCC 43068 / DSM 8971 / 11B).